The primary structure comprises 289 residues: MAIVTLLALQFTSPGPTLVEIGPLSIRWYGLLIASAVLLGISLSSRLARRRDIDPNAIADLAVWLVIGAIPAARLYYVAFEWQQYASRPAEILAIWHGGIAIHGAILGGTAALILFARRRQIPIWQLTDVVVPSLALGQAIGRWGNFFNSEAFGTPTDLPWKLFIPIDRRPLAYIQSEYFHPTFLYESLWNLLLCLLLIWLFRQGLRQRLPLKAGVMTCIYLIGYSLGRIWIEGLRTDSLMLGSLRIAQMVSIVAIAFGVLGLVWIYGLKRSLPDVVRPAISGESRSEL.

4 helical membrane-spanning segments follow: residues 21–41, 53–73, 95–115, and 122–142; these read IGPL…LLGI, IDPN…IPAA, IWHG…ALIL, and IPIW…QAIG. Arg143 serves as a coordination point for a 1,2-diacyl-sn-glycero-3-phospho-(1'-sn-glycerol). The next 3 helical transmembrane spans lie at 182–202, 215–235, and 247–267; these read PTFL…IWLF, GVMT…IEGL, and IAQM…VWIY.

This sequence belongs to the Lgt family.

Its subcellular location is the cell inner membrane. It carries out the reaction L-cysteinyl-[prolipoprotein] + a 1,2-diacyl-sn-glycero-3-phospho-(1'-sn-glycerol) = an S-1,2-diacyl-sn-glyceryl-L-cysteinyl-[prolipoprotein] + sn-glycerol 1-phosphate + H(+). It participates in protein modification; lipoprotein biosynthesis (diacylglyceryl transfer). In terms of biological role, catalyzes the transfer of the diacylglyceryl group from phosphatidylglycerol to the sulfhydryl group of the N-terminal cysteine of a prolipoprotein, the first step in the formation of mature lipoproteins. The protein is Phosphatidylglycerol--prolipoprotein diacylglyceryl transferase of Synechococcus elongatus (strain ATCC 33912 / PCC 7942 / FACHB-805) (Anacystis nidulans R2).